The following is a 732-amino-acid chain: MAP7 domain-containing protein 2 (732 aa).

At M1 the chain carries N-acetylmethionine. The segment covering 1 to 10 (MERGGGGSGT) has biased composition (gly residues). Disordered stretches follow at residues 1–64 (MERG…RREE), 95–123 (WRKLEEQRQREDQKRAAVEEKRKQKLREE), 157–186 (PGGHDACDKLSTSTMSLPKPTEPPMNKRLS), 210–244 (GPLNPSYKSSPTRNIEKKKATSTSTSGAGDVGKEA), and 279–509 (EFSG…KQKE). Basic and acidic residues predominate over residues 49 to 64 (LKSDERQRLAKERREE). Residues 51–146 (SDERQRLAKE…RTQQLELKKK (96 aa)) adopt a coiled-coil conformation. Residues 329 to 345 (MPKRKAEKEKSNKEREG) show a composition bias toward basic and acidic residues. The segment covering 347-357 (LAQQAAGPQGE) has biased composition (low complexity). Over residues 359 to 374 (ALEKHVVDKHASEKHA) the composition is skewed to basic and acidic residues. Low complexity predominate over residues 375 to 386 (AAAGGKAENSAA). Basic and acidic residues predominate over residues 404-509 (LAEKRRQARL…EKAMIEKQKE (106 aa)).

Belongs to the MAP7 family. In terms of assembly, interacts (via N-terminus) with microtubules; facilitates microtubule stabilization. Interacts with kinesin-1 family members, KIF5A, KIF5B and KIF5C.

Its subcellular location is the cytoplasm. The protein resides in the cytoskeleton. The protein localises to the microtubule organizing center. It is found in the centrosome. It localises to the midbody. Its subcellular location is the cell projection. The protein resides in the neuron projection. The protein localises to the axon. In terms of biological role, microtubule-stabilizing protein that plays a role in the control of cell motility and neurite outgrowth via direct binding to the microtubule. Acts as a critical cofactor for kinesin transport. In the proximal axon, regulates kinesin-1 family members, KIF5A, KIF5B and KIF5C recruitment to microtubules and contributes to kinesin-1-mediated transport in the axons. This chain is MAP7 domain-containing protein 2 (MAP7D2), found in Homo sapiens (Human).